The primary structure comprises 272 residues: NH(3)-dependent NAD(+) synthetase (272 aa).

An ATP-binding site is contributed by 45-52; it reads GISGGQDS. Residue D51 participates in Mg(2+) binding. R138 is a binding site for deamido-NAD(+). T158 provides a ligand contact to ATP. A Mg(2+)-binding site is contributed by E163. The deamido-NAD(+) site is built by K171 and D178. ATP is bound by residues K187 and T209. Residue 258-259 participates in deamido-NAD(+) binding; sequence HK.

Belongs to the NAD synthetase family. In terms of assembly, homodimer.

It catalyses the reaction deamido-NAD(+) + NH4(+) + ATP = AMP + diphosphate + NAD(+) + H(+). It participates in cofactor biosynthesis; NAD(+) biosynthesis; NAD(+) from deamido-NAD(+) (ammonia route): step 1/1. Its function is as follows. Catalyzes the ATP-dependent amidation of deamido-NAD to form NAD. Uses ammonia as a nitrogen source. The sequence is that of NH(3)-dependent NAD(+) synthetase from Bacillus cereus (strain Q1).